We begin with the raw amino-acid sequence, 397 residues long: MQILRFSDLCAQGQARGQRVFIRADLNVPQDDDGRITEDTRIRASVPCIRMALDAGAAVMVTSHLGRPTEGTLTPADSLAPVAARLSELLGCDVPLVADWVDGVQVQPGQVVLLENCRVNVGEKKNTPELAQKMAKLCDIYVNDAFGTAHRAEGTTYGIAEYAKVACAGPLLSAEIDAIGKALSQPARPLAAIVAGSKVSTKLTILKSLSDKVDQLIVGGGIANTFMLAAGLSIGKSLAEPDLVSEAKAVIEAMKARGAEVPIPTDVVVAKTFSADAPATVKAATDVADDDLILDIGPQTAAKLAAQLKAAGTIVWNGPVGVFEFPAFENGTKAIAQAIAESPAFSIAGGGDTLAAIAKYGIEKDVGYISTGGGAFLEVLEGKTLPAFEILHKRANG.

Substrate is bound by residues 25–27, arginine 41, 64–67, arginine 118, and arginine 151; these read DLN and HLGR. Residues lysine 202, glutamate 324, and 350 to 353 contribute to the ATP site; that span reads GGDT.

This sequence belongs to the phosphoglycerate kinase family. Monomer.

The protein resides in the cytoplasm. It carries out the reaction (2R)-3-phosphoglycerate + ATP = (2R)-3-phospho-glyceroyl phosphate + ADP. It participates in carbohydrate degradation; glycolysis; pyruvate from D-glyceraldehyde 3-phosphate: step 2/5. This is Phosphoglycerate kinase from Paracidovorax citrulli (strain AAC00-1) (Acidovorax citrulli).